The chain runs to 489 residues: COX3 mRNA-specific translational activator PET494 (489 aa).

Its subcellular location is the mitochondrion inner membrane. Functionally, required for the expression of the mitochondrial gene for cytochrome c oxidase subunit III (COX3). In Saccharomyces cerevisiae (strain ATCC 204508 / S288c) (Baker's yeast), this protein is COX3 mRNA-specific translational activator PET494 (PET494).